Consider the following 345-residue polypeptide: Protein-glutamate methylesterase/protein-glutamine glutaminase (345 aa).

The 119-residue stretch at K5 to I123 folds into the Response regulatory domain. 4-aspartylphosphate is present on D56. One can recognise a CheB-type methylesterase domain in the interval S153 to L343. Residues S165, H192, and D285 contribute to the active site.

It belongs to the CheB family. Post-translationally, phosphorylated by CheA. Phosphorylation of the N-terminal regulatory domain activates the methylesterase activity.

It localises to the cytoplasm. It catalyses the reaction [protein]-L-glutamate 5-O-methyl ester + H2O = L-glutamyl-[protein] + methanol + H(+). It carries out the reaction L-glutaminyl-[protein] + H2O = L-glutamyl-[protein] + NH4(+). Its function is as follows. Involved in chemotaxis. Part of a chemotaxis signal transduction system that modulates chemotaxis in response to various stimuli. Catalyzes the demethylation of specific methylglutamate residues introduced into the chemoreceptors (methyl-accepting chemotaxis proteins or MCP) by CheR. Also mediates the irreversible deamidation of specific glutamine residues to glutamic acid. The polypeptide is Protein-glutamate methylesterase/protein-glutamine glutaminase (Clostridium acetobutylicum (strain ATCC 824 / DSM 792 / JCM 1419 / IAM 19013 / LMG 5710 / NBRC 13948 / NRRL B-527 / VKM B-1787 / 2291 / W)).